We begin with the raw amino-acid sequence, 573 residues long: Potassium-transporting ATPase potassium-binding subunit (573 aa).

Transmembrane regions (helical) follow at residues 6–26 (ILFA…GSYI), 66–86 (FFSL…ILLL), 135–155 (ALAV…IALI), 177–197 (VFWI…FQGV), 257–277 (IQMV…GKWV), 283–303 (GWLI…VMTI), 382–402 (IFGG…LAVF), 428–448 (MFAL…AAVI), 493–513 (ITIA…VIML), and 537–557 (FIFA…TIFP).

The protein belongs to the KdpA family. The system is composed of three essential subunits: KdpA, KdpB and KdpC.

The protein localises to the cell inner membrane. Part of the high-affinity ATP-driven potassium transport (or Kdp) system, which catalyzes the hydrolysis of ATP coupled with the electrogenic transport of potassium into the cytoplasm. This subunit binds the periplasmic potassium ions and delivers the ions to the membrane domain of KdpB through an intramembrane tunnel. The sequence is that of Potassium-transporting ATPase potassium-binding subunit from Francisella tularensis subsp. holarctica (strain FTNF002-00 / FTA).